The primary structure comprises 500 residues: NAD(P)H-quinone oxidoreductase chain 4, chloroplastic (500 aa).

The next 14 helical transmembrane spans lie at 4-24, 37-57, 84-104, 111-129, 134-154, 167-187, 208-228, 242-262, 272-292, 305-325, 330-350, 374-396, 411-431, and 462-482; these read FPWLTIIVVLPIFAGSSIFFL, ICICLLELLLTTYTFCYHFQL, GLSIGPILLTGFITTLATLAA, SRLFHFLMLAMYSGQIGSF, LLLFFIMWELELIPVYLLLSM, FILYTAGGSIFLLMGIPGMGL, ALEILFYFGFLIAYAVKSPII, HYSTCMLLAGILLKMGAYGLV, AHSIFSPWLMIVGTIQVIYAA, IAYSSVSHMAFIIIGIGSITD, GAILQIISHGFIGAALFFLAG, IFTMFSSFSMASLALPGMSGFVA, FFMPKILITFVMAIGMILTPI, and LFVSICIFLPVIGIGIYPDFV.

Belongs to the complex I subunit 4 family.

Its subcellular location is the plastid. It is found in the chloroplast thylakoid membrane. The enzyme catalyses a plastoquinone + NADH + (n+1) H(+)(in) = a plastoquinol + NAD(+) + n H(+)(out). It carries out the reaction a plastoquinone + NADPH + (n+1) H(+)(in) = a plastoquinol + NADP(+) + n H(+)(out). The chain is NAD(P)H-quinone oxidoreductase chain 4, chloroplastic from Chloranthus spicatus (Chulantree).